A 702-amino-acid polypeptide reads, in one-letter code: MKTLFLAPTRNGVGLSSTALGLARALERQSLKVAFLKPIAQTYEPRTDDSVHFARAVAHLTTPDPIPLTRAEELLSQGGEEDLMEQVIALAREAAGEGSDVLIAEGLALNERNVYAGTLNARLARNLEADTVLVSSLAGVTPAELADELEIAAQGYRRSDGSGLAGFVLNFAPRELDFGSLMAELRSRSRVLASGELPLLGVVSLDPALRQLRTLDVARALDAEIINAGEAESRRVSSTVVTARSVPQMTNLFTSGALIVTPADREDVIMAAALSHLSGTPLAGLMYTSGSAPEATIQQLCEVALTSSLPVLRVPTNSFETASRLVHLDFRVPHDDPRRMDRMLDYIADRLDTVPLGARLRAPGVAGERRLPPSAFRYELIQRARAANKRIVLPEGDEPRTVKAAIRCTEKGIARCVLLAPPEKVRQVAQGQGLELPEGLEIIDPETVRGKYVAPMVELRKSKGLTEPQAEAQLEDSVVLGTMMLALGEVDGLVSGAVHTTASTVRPALQLIKTAPGSSLVSSVFFMLMPEQVLVYGDAAINPDPNAQELADIAIQSADSAHAFGIPVRVAMLSYSTGESGSGEDVEKVKEATKLVRERRPELLVDGPLQYDAASVPSVGRSKAPDSPVAGRATVFIFPDLNTGNTTYKAVQRSAGVVAVGPMLQGLRKPVNDLSRGALVDDIVYTIALTAIQATQSAADCG.

The tract at residues 375–702 (AFRYELIQRA…QATQSAADCG (328 aa)) is phosphate acetyltransferase.

The protein in the N-terminal section; belongs to the CobB/CobQ family. This sequence in the C-terminal section; belongs to the phosphate acetyltransferase and butyryltransferase family. In terms of assembly, homohexamer.

The protein localises to the cytoplasm. The enzyme catalyses acetyl-CoA + phosphate = acetyl phosphate + CoA. The protein operates within metabolic intermediate biosynthesis; acetyl-CoA biosynthesis; acetyl-CoA from acetate: step 2/2. In terms of biological role, involved in acetate metabolism. In Deinococcus radiodurans (strain ATCC 13939 / DSM 20539 / JCM 16871 / CCUG 27074 / LMG 4051 / NBRC 15346 / NCIMB 9279 / VKM B-1422 / R1), this protein is Phosphate acetyltransferase (pta).